The following is a 186-amino-acid chain: Single-stranded DNA-binding protein 1 (186 aa).

The SSB domain maps to 1 to 108 (MDATVTVVGN…LEIDEIGPTL (108 aa)). The tract at residues 119 to 186 (TQAGHGVSPD…EDFDSDEVPF (68 aa)) is disordered. Over residues 175–186 (SYEDFDSDEVPF) the composition is skewed to acidic residues.

In terms of assembly, homotetramer.

This chain is Single-stranded DNA-binding protein 1 (ssb1), found in Tropheryma whipplei (strain Twist) (Whipple's bacillus).